Here is a 160-residue protein sequence, read N- to C-terminus: Cytochrome b6-f complex subunit 4 (160 aa).

3 helical membrane passes run Leu-36–Val-56, Leu-95–Glu-115, and Thr-131–Ile-151.

Belongs to the cytochrome b family. PetD subfamily. In terms of assembly, the 4 large subunits of the cytochrome b6-f complex are cytochrome b6, subunit IV (17 kDa polypeptide, petD), cytochrome f and the Rieske protein, while the 4 small subunits are petG, petL, petM and petN. The complex functions as a dimer.

Its subcellular location is the plastid. It is found in the chloroplast thylakoid membrane. Functionally, component of the cytochrome b6-f complex, which mediates electron transfer between photosystem II (PSII) and photosystem I (PSI), cyclic electron flow around PSI, and state transitions. The sequence is that of Cytochrome b6-f complex subunit 4 from Physcomitrium patens (Spreading-leaved earth moss).